A 484-amino-acid chain; its full sequence is UDP-N-acetylmuramate--L-alanine ligase (484 aa).

ATP is bound at residue 122 to 128 (GTHGKTT).

The protein belongs to the MurCDEF family.

The protein resides in the cytoplasm. The catalysed reaction is UDP-N-acetyl-alpha-D-muramate + L-alanine + ATP = UDP-N-acetyl-alpha-D-muramoyl-L-alanine + ADP + phosphate + H(+). Its pathway is cell wall biogenesis; peptidoglycan biosynthesis. Functionally, cell wall formation. The protein is UDP-N-acetylmuramate--L-alanine ligase of Mycobacterium sp. (strain JLS).